Reading from the N-terminus, the 247-residue chain is tRNA (guanine-N(7)-)-methyltransferase (247 aa).

S-adenosyl-L-methionine contacts are provided by residues Gly-70, 93 to 94 (EI), 128 to 129 (NA), and Leu-148. Residue Asp-151 is part of the active site. 226–228 (SEE) contributes to the S-adenosyl-L-methionine binding site.

It belongs to the class I-like SAM-binding methyltransferase superfamily. TrmB family.

It localises to the nucleus. It carries out the reaction guanosine(46) in tRNA + S-adenosyl-L-methionine = N(7)-methylguanosine(46) in tRNA + S-adenosyl-L-homocysteine. The protein operates within tRNA modification; N(7)-methylguanine-tRNA biosynthesis. Functionally, catalyzes the formation of N(7)-methylguanine at position 46 (m7G46) in tRNA. This Drosophila virilis (Fruit fly) protein is tRNA (guanine-N(7)-)-methyltransferase.